The sequence spans 246 residues: Ribulose-phosphate 3-epimerase (246 aa).

S9 lines the substrate pocket. A divalent metal cation is bound by residues H34, D36, and H83. D36 functions as the Proton acceptor in the catalytic mechanism. Residues H83, 159-162 (GFGG), 188-190 (DGG), and 210-212 (GTS) each bind substrate. D188 contributes to the a divalent metal cation binding site. D188 functions as the Proton donor in the catalytic mechanism.

It belongs to the ribulose-phosphate 3-epimerase family. Co(2+) is required as a cofactor. It depends on Fe(2+) as a cofactor. The cofactor is Mn(2+). Requires Zn(2+) as cofactor.

The catalysed reaction is D-ribulose 5-phosphate = D-xylulose 5-phosphate. Its pathway is carbohydrate degradation; pentose phosphate pathway; D-xylulose 5-phosphate from D-ribulose 5-phosphate (non-oxidative stage): step 1/1. Functionally, catalyzes the reversible epimerization of D-ribulose 5-phosphate to D-xylulose 5-phosphate. The chain is Ribulose-phosphate 3-epimerase (RPE1) from Candida glabrata (strain ATCC 2001 / BCRC 20586 / JCM 3761 / NBRC 0622 / NRRL Y-65 / CBS 138) (Yeast).